The primary structure comprises 380 residues: Endo-polygalacturonase (380 aa).

A signal peptide spans 1–17; it reads MVHILSSALSLLRLGAA. Residues 18–42 constitute a propeptide that is removed on maturation; sequence VSAAPAPAPTAAPNVADALAAVEKR. Residues Cys46 and Cys64 are joined by a disulfide bond. PbH1 repeat units lie at residues 178–207, 208–229, 230–250, 259–280, 288–310, and 322–343; these read ASGL…DVGS, STDI…AINS, GTGI…SIGS, VSDV…RIKT, VSGV…VIEQ, and TSGV…SSSA. Asp222 acts as the Proton donor in catalysis. Cys224 and Cys240 form a disulfide bridge. His244 is an active-site residue. Cys350 and Cys353 form a disulfide bridge. The N-linked (GlcNAc...) asparagine glycan is linked to Asn361. Cys371 and Cys380 are disulfide-bonded.

It belongs to the glycosyl hydrolase 28 family.

It is found in the secreted. It carries out the reaction (1,4-alpha-D-galacturonosyl)n+m + H2O = (1,4-alpha-D-galacturonosyl)n + (1,4-alpha-D-galacturonosyl)m.. The chain is Endo-polygalacturonase (PG1) from Sclerotinia sclerotiorum (White mold).